We begin with the raw amino-acid sequence, 236 residues long: Small ribosomal subunit protein uS2c (236 aa).

Component of the chloroplast small ribosomal subunit (SSU). Mature 70S chloroplast ribosomes of higher plants consist of a small (30S) and a large (50S) subunit. The 30S small subunit contains 1 molecule of ribosomal RNA (16S rRNA) and 24 different proteins. The 50S large subunit contains 3 rRNA molecules (23S, 5S and 4.5S rRNA) and 33 different proteins.

The protein localises to the plastid. Its subcellular location is the chloroplast. Functionally, component of the chloroplast ribosome (chloro-ribosome), a dedicated translation machinery responsible for the synthesis of chloroplast genome-encoded proteins, including proteins of the transcription and translation machinery and components of the photosynthetic apparatus. The polypeptide is Small ribosomal subunit protein uS2c (rps2) (Spinacia oleracea (Spinach)).